The chain runs to 268 residues: Chymotrypsin-C (268 aa).

The first 16 residues, 1–16 (MLGITVLAAILACASC), serve as a signal peptide directing secretion. Positions 17–29 (CGNPAFPPNLSTR) are cleaved as a propeptide — activation peptide. 5 disulfide bridges follow: Cys-17/Cys-141, Cys-59/Cys-75, Cys-155/Cys-222, Cys-186/Cys-202, and Cys-212/Cys-243. Asn-25 carries N-linked (GlcNAc...) asparagine glycosylation. Positions 30–267 (VVGGEDAVPN…YNDWINEKIQ (238 aa)) constitute a Peptidase S1 domain. The active-site Charge relay system is the His-74. N-linked (GlcNAc...) asparagine glycosylation occurs at Asn-90. Asp-121 (charge relay system) is an active-site residue. Ser-216 acts as the Charge relay system in catalysis.

It belongs to the peptidase S1 family. Elastase subfamily. Pancreas.

The enzyme catalyses Preferential cleavage: Leu-|-Xaa, Tyr-|-Xaa, Phe-|-Xaa, Met-|-Xaa, Trp-|-Xaa, Gln-|-Xaa, Asn-|-Xaa.. In terms of biological role, regulates activation and degradation of trypsinogens and procarboxypeptidases by targeting specific cleavage sites within their zymogen precursors. Has chymotrypsin-type protease activity and hypocalcemic activity. Cleaves TRY4 and TRY5 and thereby inhibits their autoactivation. The chain is Chymotrypsin-C (Ctrc) from Rattus norvegicus (Rat).